Reading from the N-terminus, the 162-residue chain is UPF0763 protein Sdel_0383 (162 aa).

It belongs to the UPF0763 family.

This Sulfurospirillum deleyianum (strain ATCC 51133 / DSM 6946 / 5175) protein is UPF0763 protein Sdel_0383.